The sequence spans 131 residues: Peptide methionine sulfoxide reductase MsrB (131 aa).

The region spanning Leu8–Arg130 is the MsrB domain. Residues Cys47, Cys50, Cys96, and Cys99 each coordinate Zn(2+). Cys119 serves as the catalytic Nucleophile.

It belongs to the MsrB Met sulfoxide reductase family. Requires Zn(2+) as cofactor.

It catalyses the reaction L-methionyl-[protein] + [thioredoxin]-disulfide + H2O = L-methionyl-(R)-S-oxide-[protein] + [thioredoxin]-dithiol. The chain is Peptide methionine sulfoxide reductase MsrB from Pseudomonas savastanoi pv. phaseolicola (strain 1448A / Race 6) (Pseudomonas syringae pv. phaseolicola (strain 1448A / Race 6)).